Consider the following 269-residue polypeptide: Peptide deformylase 1A, chloroplastic/mitochondrial (269 aa).

The transit peptide at 1–60 directs the protein to the chloroplast and mitochondrion; sequence MGLHRDEATAMETLFRVSLRLLPVSAAVTCRSIRFPVSRPGSSHLLNRKLYNLPTSSSSS. Substrate is bound by residues 123-126 and Gly-187; that span reads PGVG. Cys-188 is a Zn(2+) binding site. The segment at 191–196 is dimerization; it reads VDGFRA. His-230 is a Zn(2+) binding site. Glu-231 is an active-site residue. Residue His-234 participates in Zn(2+) binding. The dimerization stretch occupies residues 236–254; sequence DGNLYVDKMVPRTFRTVDN.

Belongs to the polypeptide deformylase family. As to quaternary structure, homodimer. The cofactor is Zn(2+). In terms of tissue distribution, expressed in roots, leaves, flowers and siliques.

The protein localises to the plastid. It localises to the chloroplast stroma. The protein resides in the mitochondrion. It catalyses the reaction N-terminal N-formyl-L-methionyl-[peptide] + H2O = N-terminal L-methionyl-[peptide] + formate. Its activity is regulated as follows. Inhibited by actinonin. In terms of biological role, removes the formyl group from the N-terminal Met of newly synthesized proteins. The chain is Peptide deformylase 1A, chloroplastic/mitochondrial (PDF1A) from Arabidopsis thaliana (Mouse-ear cress).